Here is a 109-residue protein sequence, read N- to C-terminus: Large ribosomal subunit protein uL24 (109 aa).

This sequence belongs to the universal ribosomal protein uL24 family. In terms of assembly, part of the 50S ribosomal subunit.

Functionally, one of two assembly initiator proteins, it binds directly to the 5'-end of the 23S rRNA, where it nucleates assembly of the 50S subunit. Its function is as follows. One of the proteins that surrounds the polypeptide exit tunnel on the outside of the subunit. This is Large ribosomal subunit protein uL24 from Desulforapulum autotrophicum (strain ATCC 43914 / DSM 3382 / VKM B-1955 / HRM2) (Desulfobacterium autotrophicum).